Here is an 810-residue protein sequence, read N- to C-terminus: MQFPESWLRTFVDPQLTTDELSHALTMAGLEVESLRPAAPPTEKIVVGRVLEVVKHPDADKLNVCQVDAGTGATLQIVCGAPNVAPGIKVPVALVGAKLPPAEEGGAPFAIKLSKLRGVESQGMLCSARELKLSEDHSGLMILPEGTPVGQDIREALNLDDTVFEIKLTPNKADCLSVFGIARETAAITGAPLAAPDIRPVLAELTETLPVKISAPDLCGRFSGRVIRGVNARAKTPHWMVERLERAGQRSVSALVDISNYVMFELGRPSHVFDLDKIHGGIDVRWGKRGESLKLLNGNTIELDETVGVISDGAQVESLAGIMGGDSTAVTLDTTNIYLEAAFWWPDSIRGRARKYNFSTDAAHRFERGVDYSTTVEHVERITQLILDICGGQAGPVDDQIVSLPQRAPVSMRASRANRIIGVEIGEDEIAQIFTRLGLAFERDGDVFRVTPPPHRFDIEIEEDLIEEVARIYGFEKIPARPPVAKSEMRATDETRRSVHAIRHALAARDYAETVNFSFVDAEWERDFAGNDNPVRLLNPIASQLSVMRTTLFGSLVGVLRHNLNRRAERVRVFEAGRVFVADPSVKAGELAVEGYAQPKRIGALAYGPVVEEQWGTATRQVDYFDVKGDLEALLAPVPARFVKAEHPALHPGRSARIEVDGHAVGWIGELHPRLMQKYELPHAPVMFEIDTDALVARALPAPSEVSKFPPVRRDIAVVVDQKVEVQALFDEMKKALADDACKFVQRVALFDEFRAKSNTSGGLSAHEKSLAFRVTLQDAAGTLQDETVDQAIQTLVDRMARVYGARLRG.

Residues 39 to 154 (APPTEKIVVG…EGTPVGQDIR (116 aa)) form the tRNA-binding domain. Residues 405–480 (PQRAPVSMRA…RIYGFEKIPA (76 aa)) form the B5 domain. Mg(2+) is bound by residues Asp-458, Asp-464, Glu-467, and Glu-468. The FDX-ACB domain maps to 707–809 (SKFPPVRRDI…MARVYGARLR (103 aa)).

It belongs to the phenylalanyl-tRNA synthetase beta subunit family. Type 1 subfamily. Tetramer of two alpha and two beta subunits. Mg(2+) serves as cofactor.

Its subcellular location is the cytoplasm. It carries out the reaction tRNA(Phe) + L-phenylalanine + ATP = L-phenylalanyl-tRNA(Phe) + AMP + diphosphate + H(+). The sequence is that of Phenylalanine--tRNA ligase beta subunit from Burkholderia mallei (strain ATCC 23344).